Here is a 434-residue protein sequence, read N- to C-terminus: D-amino acid dehydrogenase (434 aa).

An FAD-binding site is contributed by 3–17 (VLVLGSGVIGTASAY).

The protein belongs to the DadA oxidoreductase family. The cofactor is FAD.

It catalyses the reaction a D-alpha-amino acid + A + H2O = a 2-oxocarboxylate + AH2 + NH4(+). It participates in amino-acid degradation; D-alanine degradation; NH(3) and pyruvate from D-alanine: step 1/1. In terms of biological role, oxidative deamination of D-amino acids. This chain is D-amino acid dehydrogenase, found in Pseudomonas putida (strain ATCC 700007 / DSM 6899 / JCM 31910 / BCRC 17059 / LMG 24140 / F1).